Reading from the N-terminus, the 369-residue chain is Cellular tumor antigen p53 (369 aa).

Positions 1-28 (MAESQEFAELWERNLISTQEAGTCWELI) are transcription activation (acidic). The DNA-binding element occupies 66 to 256 (DYPGEHGFKL…KTEESNFRKD (191 aa)). Zn(2+) is bound by residues Cys140, His143, Cys202, and Cys206. The tract at residues 237 to 244 (RVCACPGR) is interaction with DNA. The segment covering 246–263 (RKTEESNFRKDQETKTLD) has biased composition (basic and acidic residues). Disordered regions lie at residues 246 to 296 (RKTE…SGSS) and 318 to 369 (NDSL…SDSD). Residues 269–281 (NKRSLTKDSTSSV) are compositionally biased toward polar residues. The Bipartite nuclear localization signal signature appears at 270–289 (KRSLTKDSTSSVPRPEGSKK). The tract at residues 298–329 (EEIYTLQVRGKERYEMLKKINDSLELSDVVPP) is oligomerization. A Nuclear export signal motif is present at residues 312 to 323 (EMLKKINDSLEL). The tract at residues 342–365 (KGKKKDGQTPEPKRGKKLMVKDEK) is basic (repression of DNA-binding). A compositionally biased stretch (basic and acidic residues) spans 346–369 (KDGQTPEPKRGKKLMVKDEKSDSD).

This sequence belongs to the p53 family. As to quaternary structure, binds DNA as a homotetramer. The cofactor is Zn(2+).

It localises to the cytoplasm. The protein resides in the nucleus. In terms of biological role, multifunctional transcription factor that induces cell cycle arrest, DNA repair or apoptosis upon binding to its target DNA sequence. Acts as a tumor suppressor in many tumor types; induces growth arrest or apoptosis depending on the physiological circumstances and cell type. Negatively regulates cell division by controlling expression of a set of genes required for this process. One of the activated genes is an inhibitor of cyclin-dependent kinases. Apoptosis induction seems to be mediated either by stimulation of BAX and FAS antigen expression, or by repression of Bcl-2 expression. This is Cellular tumor antigen p53 (tp53) from Barbus barbus (Barbel).